Here is an 898-residue protein sequence, read N- to C-terminus: Histone-lysine N-methyltransferase mes-4 (898 aa).

The interval 1–68 (MLPSSGDSSK…APILTNAPKD (68 aa)) is disordered. The span at 36–51 (QRNATPQGAGSETSSN) shows a compositional bias: polar residues. PHD-type zinc fingers lie at residues 126 to 214 (DSKC…CNLD) and 303 to 355 (IKAC…CVCG). An SET domain is found at 537–665 (EKIKLAATLC…DGDEITFSYN (129 aa)). One can recognise a Post-SET domain in the interval 671–687 (NLPDCECGAENCMGTMG). The interval 689–847 (AKREKPEVAD…SLQTIQETGK (159 aa)) is disordered. Residues 692-704 (EKPEVADSSEKAA) show a composition bias toward basic and acidic residues. Residues 705-719 (KKNKSSKKKSVKNQN) show a composition bias toward basic residues. 2 stretches are compositionally biased toward low complexity: residues 737–751 (ISPS…SSTS) and 761–773 (SQNK…NSNQ). Polar residues predominate over residues 774–788 (PVADTGSTLSTSTEL). The span at 802-811 (SSRSRAASSS) shows a compositional bias: low complexity.

This sequence belongs to the class V-like SAM-binding methyltransferase superfamily. Histone-lysine methyltransferase family. SET2 subfamily. As to expression, in adults, it is predominantly expressed in the germline, and weakly expressed in intestinal cells.

Its subcellular location is the nucleus. The protein localises to the chromosome. It catalyses the reaction L-lysyl(36)-[histone H3] + 2 S-adenosyl-L-methionine = N(6),N(6)-dimethyl-L-lysyl(36)-[histone H3] + 2 S-adenosyl-L-homocysteine + 2 H(+). Functionally, histone methyltransferase. Dimethylates 'Lys-36' of histone H3, a specific tag for epigenetic transcriptional activation. Plays a central role in early development and is responsible for all H3 'Lys-36' dimethylation until about the 40-cell stage. Indirectly involved in the global inactivation of the X chromosomes in germline cells, possibly by excluding the mes-2-mes-3-mes-6 repressive Polycomb complex from the autosomes. Not related to transcription elongation. Required for small-RNA-induced H3K27 trimethylation. May suppress sensitivity to RNAi. May regulate the expression of genes required for vulval development. The chain is Histone-lysine N-methyltransferase mes-4 from Caenorhabditis elegans.